The following is a 645-amino-acid chain: Exoribonuclease 2 (645 aa).

Residues 191 to 517 (REDLTELNFI…MNHRLLKALI (327 aa)) enclose the RNB domain. The S1 motif domain maps to 563-645 (HIRYSAEIID…DNRSIIAKIV (83 aa)).

It belongs to the RNR ribonuclease family. RNase II subfamily.

It localises to the cytoplasm. It catalyses the reaction Exonucleolytic cleavage in the 3'- to 5'-direction to yield nucleoside 5'-phosphates.. Its function is as follows. Involved in mRNA degradation. Hydrolyzes single-stranded polyribonucleotides processively in the 3' to 5' direction. The chain is Exoribonuclease 2 from Baumannia cicadellinicola subsp. Homalodisca coagulata.